We begin with the raw amino-acid sequence, 92 residues long: Small ribosomal subunit protein uS19 (92 aa).

The protein belongs to the universal ribosomal protein uS19 family.

Protein S19 forms a complex with S13 that binds strongly to the 16S ribosomal RNA. The chain is Small ribosomal subunit protein uS19 from Clostridium botulinum (strain Eklund 17B / Type B).